A 934-amino-acid chain; its full sequence is Translation initiation factor IF-2 (934 aa).

Residues 54–323 (AQESKPTTPP…KRQKRNEYEA (270 aa)) form a disordered region. Composition is skewed to low complexity over residues 80 to 154 (PKPG…AGKP), 185 to 197 (RGGA…PRPG), 206 to 231 (GQAP…PGAA), and 238 to 250 (RPSP…TPSP). A compositionally biased stretch (gly residues) spans 260–303 (GFGGGRGRGGRPGGPGGPGGPGGPGPRGGRGGRRGGTAGAFGRP). Over residues 308-317 (RRGRKSKRQK) the composition is skewed to basic residues. In terms of domain architecture, tr-type G spans 430 to 602 (QRPPVVTVMG…VLLTADASLD (173 aa)). The G1 stretch occupies residues 439 to 446 (GHVDHGKT). 439 to 446 (GHVDHGKT) is a binding site for GTP. A G2 region spans residues 464 to 468 (GITQH). Residues 489-492 (DTPG) form a G3 region. GTP is bound by residues 489-493 (DTPGH) and 543-546 (NKID). The G4 stretch occupies residues 543–546 (NKID). Residues 579–581 (SAK) form a G5 region.

Belongs to the TRAFAC class translation factor GTPase superfamily. Classic translation factor GTPase family. IF-2 subfamily.

It is found in the cytoplasm. Its function is as follows. One of the essential components for the initiation of protein synthesis. Protects formylmethionyl-tRNA from spontaneous hydrolysis and promotes its binding to the 30S ribosomal subunits. Also involved in the hydrolysis of GTP during the formation of the 70S ribosomal complex. This chain is Translation initiation factor IF-2, found in Corynebacterium urealyticum (strain ATCC 43042 / DSM 7109).